The sequence spans 180 residues: Large ribosomal subunit protein uL5 (180 aa).

It belongs to the universal ribosomal protein uL5 family. As to quaternary structure, part of the 50S ribosomal subunit; part of the 5S rRNA/L5/L18/L25 subcomplex. Contacts the 5S rRNA and the P site tRNA. Forms a bridge to the 30S subunit in the 70S ribosome.

This is one of the proteins that bind and probably mediate the attachment of the 5S RNA into the large ribosomal subunit, where it forms part of the central protuberance. In the 70S ribosome it contacts protein S13 of the 30S subunit (bridge B1b), connecting the 2 subunits; this bridge is implicated in subunit movement. Contacts the P site tRNA; the 5S rRNA and some of its associated proteins might help stabilize positioning of ribosome-bound tRNAs. The chain is Large ribosomal subunit protein uL5 from Xanthomonas axonopodis pv. citri (strain 306).